We begin with the raw amino-acid sequence, 231 residues long: Potassium/proton antiporter CemA (231 aa).

Helical transmembrane passes span phenylalanine 9–phenylalanine 29, isoleucine 116–leucine 136, and isoleucine 191–isoleucine 211.

It belongs to the CemA family.

Its subcellular location is the plastid. The protein resides in the chloroplast inner membrane. It catalyses the reaction K(+)(in) + H(+)(out) = K(+)(out) + H(+)(in). Its function is as follows. Contributes to K(+)/H(+) antiport activity by supporting proton efflux to control proton extrusion and homeostasis in chloroplasts in a light-dependent manner to modulate photosynthesis. Prevents excessive induction of non-photochemical quenching (NPQ) under continuous-light conditions. Indirectly promotes efficient inorganic carbon uptake into chloroplasts. This Manihot esculenta (Cassava) protein is Potassium/proton antiporter CemA.